Reading from the N-terminus, the 190-residue chain is Probable nicotinate-nucleotide adenylyltransferase (190 aa).

It belongs to the NadD family.

The catalysed reaction is nicotinate beta-D-ribonucleotide + ATP + H(+) = deamido-NAD(+) + diphosphate. It functions in the pathway cofactor biosynthesis; NAD(+) biosynthesis; deamido-NAD(+) from nicotinate D-ribonucleotide: step 1/1. In terms of biological role, catalyzes the reversible adenylation of nicotinate mononucleotide (NaMN) to nicotinic acid adenine dinucleotide (NaAD). In Frankia alni (strain DSM 45986 / CECT 9034 / ACN14a), this protein is Probable nicotinate-nucleotide adenylyltransferase.